A 1224-amino-acid polypeptide reads, in one-letter code: ATP-dependent helicase/nuclease subunit A (1224 aa).

The 466-residue stretch at 15–480 (VIWTDAQWQS…IDLSQNFRSR (466 aa)) folds into the UvrD-like helicase ATP-binding domain. 36 to 43 (AAAGSGKT) contacts ATP. One can recognise a UvrD-like helicase C-terminal domain in the interval 497 to 791 (EQVGEISYDD…RMMTIHSSKG (295 aa)).

It belongs to the helicase family. AddA subfamily. As to quaternary structure, heterodimer of AddA and AddB/RexB. Mg(2+) is required as a cofactor.

It catalyses the reaction Couples ATP hydrolysis with the unwinding of duplex DNA by translocating in the 3'-5' direction.. It carries out the reaction ATP + H2O = ADP + phosphate + H(+). The heterodimer acts as both an ATP-dependent DNA helicase and an ATP-dependent, dual-direction single-stranded exonuclease. Recognizes the chi site generating a DNA molecule suitable for the initiation of homologous recombination. The AddA nuclease domain is required for chi fragment generation; this subunit has the helicase and 3' -&gt; 5' nuclease activities. This chain is ATP-dependent helicase/nuclease subunit A, found in Staphylococcus epidermidis (strain ATCC 12228 / FDA PCI 1200).